The chain runs to 146 residues: Large ribosomal subunit protein uL15 (146 aa).

The segment covering 1 to 10 (MTIKLHDLKP) has biased composition (basic and acidic residues). The interval 1–52 (MTIKLHDLKPARGSKTPRTRVGRGEGSKGKTAGRGTKGTKARKNVPVTFEGG) is disordered.

The protein belongs to the universal ribosomal protein uL15 family. Part of the 50S ribosomal subunit.

Functionally, binds to the 23S rRNA. The protein is Large ribosomal subunit protein uL15 of Mycolicibacterium paratuberculosis (strain ATCC BAA-968 / K-10) (Mycobacterium paratuberculosis).